A 591-amino-acid polypeptide reads, in one-letter code: Aspartate--tRNA ligase (591 aa).

Residue Glu173 coordinates L-aspartate. The tract at residues 197–200 (QLFK) is aspartate. L-aspartate is bound at residue Arg219. Residues 219–221 (RDE) and Gln228 contribute to the ATP site. His448 contributes to the L-aspartate binding site. Glu482 contacts ATP. Position 489 (Arg489) interacts with L-aspartate. Residue 534–537 (GLDR) participates in ATP binding.

It belongs to the class-II aminoacyl-tRNA synthetase family. Type 1 subfamily. Homodimer.

The protein resides in the cytoplasm. The catalysed reaction is tRNA(Asp) + L-aspartate + ATP = L-aspartyl-tRNA(Asp) + AMP + diphosphate. Catalyzes the attachment of L-aspartate to tRNA(Asp) in a two-step reaction: L-aspartate is first activated by ATP to form Asp-AMP and then transferred to the acceptor end of tRNA(Asp). This Shewanella oneidensis (strain ATCC 700550 / JCM 31522 / CIP 106686 / LMG 19005 / NCIMB 14063 / MR-1) protein is Aspartate--tRNA ligase.